The primary structure comprises 288 residues: MEKYHGLEKIGEGTYGVVYKAQNNYGETFALKKIRLEKEDEGIPSTAIREISILKELKHSNIVKLYDVIHTKKRLILVFEHLDQDLKKLLDVCDGGLESVTAKSFLLQLLSGIAYCHEHRVLHRDLKPQNLLINREGELKIADFGLARAFGIPVRKYTHEVVTLWYRAPDILMGSKKYSTPIDIWSVGCIFAEMVNGRPLFPGVSETDQLMRIFRILGTPNSANWPSVTELPKYDPDFIVYEPLPWETFLKGLDDTGIDLLSKMLRLDPNQRITAKEALQHAYFKESS.

The region spanning Y4 to F284 is the Protein kinase domain. Residues I10–V18 and K32 contribute to the ATP site. T14 carries the phosphothreonine modification. Phosphotyrosine is present on Y15. D125 (proton acceptor) is an active-site residue. Residue T158 is modified to Phosphothreonine.

Belongs to the protein kinase superfamily. CMGC Ser/Thr protein kinase family. CDC2/CDKX subfamily. In terms of assembly, may form a complex composed of at least the catalytic subunit CRK2 and a cyclin. It depends on Mg(2+) as a cofactor.

The protein resides in the cytoplasm. It catalyses the reaction L-seryl-[protein] + ATP = O-phospho-L-seryl-[protein] + ADP + H(+). The enzyme catalyses L-threonyl-[protein] + ATP = O-phospho-L-threonyl-[protein] + ADP + H(+). It carries out the reaction [DNA-directed RNA polymerase] + ATP = phospho-[DNA-directed RNA polymerase] + ADP + H(+). With respect to regulation, phosphorylation at Thr-14 or Tyr-15 inactivates the enzyme, while phosphorylation at Thr-158 activates it. In terms of biological role, serine/threonine-protein kinase. Involved in the control of the cell cycle. Required for entry into S-phase and mitosis. Probable component of the kinase complex that phosphorylates the repetitive C-terminus of RNA polymerase II. This is Cyclin-dependent kinase 2 homolog from Plasmodium knowlesi (strain H).